We begin with the raw amino-acid sequence, 85 residues long: Alpha-insect toxin BjaIT (85 aa).

Residues 1–19 (MNYLVVICFALLLMTGVES) form the signal peptide. The 63-residue stretch at 21–83 (RDAYIADNLN…VPIRIPGACR (63 aa)) folds into the LCN-type CS-alpha/beta domain. 4 disulfide bridges follow: Cys31–Cys82, Cys35–Cys55, Cys41–Cys65, and Cys45–Cys67. An Arginine amide modification is found at Arg83.

Belongs to the long (4 C-C) scorpion toxin superfamily. Sodium channel inhibitor family. Alpha subfamily. Expressed by the venom gland.

The protein localises to the secreted. Its function is as follows. Alpha toxins bind voltage-independently at site-3 of sodium channels (Nav) and inhibit the inactivation of the activated channels, thereby blocking neuronal transmission. This toxin is active against insects (para/tipE). This Hottentotta judaicus (Black scorpion) protein is Alpha-insect toxin BjaIT.